Consider the following 156-residue polypeptide: Small ribosomal subunit protein uS7 (156 aa).

It belongs to the universal ribosomal protein uS7 family. In terms of assembly, part of the 30S ribosomal subunit. Contacts proteins S9 and S11.

Its function is as follows. One of the primary rRNA binding proteins, it binds directly to 16S rRNA where it nucleates assembly of the head domain of the 30S subunit. Is located at the subunit interface close to the decoding center, probably blocks exit of the E-site tRNA. This chain is Small ribosomal subunit protein uS7, found in Dinoroseobacter shibae (strain DSM 16493 / NCIMB 14021 / DFL 12).